A 766-amino-acid polypeptide reads, in one-letter code: Alpha-onocerin synthase LCD (766 aa).

PFTB repeat units lie at residues 101–143, 151–192, 456–507, 517–558, 594–634, 643–684, and 705–752; these read LCRA…GALD, QREI…RLMG, QESY…STTD, IHEC…PGYK, IQEG…LASG, IQRA…HVVH, and LHRA…WALG. D488 (proton donor) is an active-site residue.

The protein belongs to the terpene cyclase/mutase family.

The enzyme catalyses pre-alpha-onocerin = alpha-onocerin. Its pathway is secondary metabolite biosynthesis; terpenoid biosynthesis. Functionally, oxidosqualene cyclase involved in the biosynthesis of alpha-onocerin, a triterpenoid characterized by a symmetrical structure due to cyclizations at both termini of dioxidosqualene that inhibits acetylcholinesterase. Catalyzes the second half of the cyclization, exclusively from pre-alpha-onocerin. The sequence is that of Alpha-onocerin synthase LCD from Lycopodium clavatum (Stag's-horn clubmoss).